The chain runs to 224 residues: UPF0758 protein lmo1549 (224 aa).

The 123-residue stretch at 102–224 folds into the MPN domain; it reads VVRCPEDAVK…YISLKEKGYF (123 aa). Residues His173, His175, and Asp186 each contribute to the Zn(2+) site. Residues 173 to 186 carry the JAMM motif motif; the sequence is HNHPSGDPTPSSED.

The protein belongs to the UPF0758 family.

The protein is UPF0758 protein lmo1549 of Listeria monocytogenes serovar 1/2a (strain ATCC BAA-679 / EGD-e).